Consider the following 130-residue polypeptide: Small ribosomal subunit protein uS9 (130 aa).

It belongs to the universal ribosomal protein uS9 family.

The protein is Small ribosomal subunit protein uS9 of Albidiferax ferrireducens (strain ATCC BAA-621 / DSM 15236 / T118) (Rhodoferax ferrireducens).